We begin with the raw amino-acid sequence, 459 residues long: Bifunctional protein GlmU (459 aa).

The interval 1 to 229 (MSNFAIILAA…FDESLGVNDR (229 aa)) is pyrophosphorylase. UDP-N-acetyl-alpha-D-glucosamine contacts are provided by residues 8-11 (LAAG), lysine 22, glutamine 72, and 77-78 (GT). Aspartate 102 is a Mg(2+) binding site. Positions 139, 154, 169, and 227 each coordinate UDP-N-acetyl-alpha-D-glucosamine. Asparagine 227 contributes to the Mg(2+) binding site. Positions 230-250 (VALATAESVMRRRINHKHMVN) are linker. Residues 251 to 459 (GVSFVNPEAT…TRLPHHPKNQ (209 aa)) are N-acetyltransferase. UDP-N-acetyl-alpha-D-glucosamine-binding residues include arginine 332 and lysine 350. Histidine 362 (proton acceptor) is an active-site residue. Positions 365 and 376 each coordinate UDP-N-acetyl-alpha-D-glucosamine. Acetyl-CoA contacts are provided by residues alanine 379, 385 to 386 (NY), serine 404, alanine 422, and arginine 439.

This sequence in the N-terminal section; belongs to the N-acetylglucosamine-1-phosphate uridyltransferase family. The protein in the C-terminal section; belongs to the transferase hexapeptide repeat family. In terms of assembly, homotrimer. It depends on Mg(2+) as a cofactor.

The protein resides in the cytoplasm. It catalyses the reaction alpha-D-glucosamine 1-phosphate + acetyl-CoA = N-acetyl-alpha-D-glucosamine 1-phosphate + CoA + H(+). The catalysed reaction is N-acetyl-alpha-D-glucosamine 1-phosphate + UTP + H(+) = UDP-N-acetyl-alpha-D-glucosamine + diphosphate. Its pathway is nucleotide-sugar biosynthesis; UDP-N-acetyl-alpha-D-glucosamine biosynthesis; N-acetyl-alpha-D-glucosamine 1-phosphate from alpha-D-glucosamine 6-phosphate (route II): step 2/2. The protein operates within nucleotide-sugar biosynthesis; UDP-N-acetyl-alpha-D-glucosamine biosynthesis; UDP-N-acetyl-alpha-D-glucosamine from N-acetyl-alpha-D-glucosamine 1-phosphate: step 1/1. It participates in bacterial outer membrane biogenesis; LPS lipid A biosynthesis. In terms of biological role, catalyzes the last two sequential reactions in the de novo biosynthetic pathway for UDP-N-acetylglucosamine (UDP-GlcNAc). The C-terminal domain catalyzes the transfer of acetyl group from acetyl coenzyme A to glucosamine-1-phosphate (GlcN-1-P) to produce N-acetylglucosamine-1-phosphate (GlcNAc-1-P), which is converted into UDP-GlcNAc by the transfer of uridine 5-monophosphate (from uridine 5-triphosphate), a reaction catalyzed by the N-terminal domain. This is Bifunctional protein GlmU from Streptococcus pneumoniae (strain Taiwan19F-14).